The chain runs to 473 residues: Photosystem II CP43 reaction center protein (473 aa).

The propeptide occupies 1–14; the sequence is MKTLYSLRRFSHVE. Thr-15 carries the post-translational modification N-acetylthreonine. Thr-15 carries the post-translational modification Phosphothreonine. A run of 5 helical transmembrane segments spans residues 69–93, 134–155, 178–200, 255–275, and 291–312; these read LFEV…PHLA, LLGP…KDRN, KALY…RKIT, KPFA…LSYS, and WFNN…ASQA. Glu-367 is a binding site for [CaMn4O5] cluster. The helical transmembrane segment at 447 to 471 threads the bilayer; it reads RARAAAAGFEKGIDRDFEPVLSMTP.

Belongs to the PsbB/PsbC family. PsbC subfamily. PSII is composed of 1 copy each of membrane proteins PsbA, PsbB, PsbC, PsbD, PsbE, PsbF, PsbH, PsbI, PsbJ, PsbK, PsbL, PsbM, PsbT, PsbX, PsbY, PsbZ, Psb30/Ycf12, at least 3 peripheral proteins of the oxygen-evolving complex and a large number of cofactors. It forms dimeric complexes. It depends on Binds multiple chlorophylls and provides some of the ligands for the Ca-4Mn-5O cluster of the oxygen-evolving complex. It may also provide a ligand for a Cl- that is required for oxygen evolution. PSII binds additional chlorophylls, carotenoids and specific lipids. as a cofactor.

Its subcellular location is the plastid membrane. Functionally, one of the components of the core complex of photosystem II (PSII). It binds chlorophyll and helps catalyze the primary light-induced photochemical processes of PSII. PSII is a light-driven water:plastoquinone oxidoreductase, using light energy to abstract electrons from H(2)O, generating O(2) and a proton gradient subsequently used for ATP formation. In Cuscuta gronovii (Common dodder), this protein is Photosystem II CP43 reaction center protein.